Reading from the N-terminus, the 247-residue chain is NAD-dependent protein deacetylase (247 aa).

The Deacetylase sirtuin-type domain maps to 1-247; it reads MDTRKNLKEL…LGGIVEELGY (247 aa). Residues alanine 23, threonine 27, phenylalanine 34, arginine 35, glutamine 104, isoleucine 106, aspartate 107, and histidine 122 each contribute to the NAD(+) site. Phenylalanine 34 is a nicotinamide binding site. 2 residues coordinate nicotinamide: isoleucine 106 and aspartate 107. Histidine 122 serves as the catalytic Proton acceptor. Residues cysteine 130, cysteine 133, cysteine 152, and cysteine 155 each contribute to the Zn(2+) site. Threonine 193, serine 194, asparagine 216, and isoleucine 234 together coordinate NAD(+).

This sequence belongs to the sirtuin family. Class U subfamily. The cofactor is Zn(2+).

It localises to the cytoplasm. The enzyme catalyses N(6)-acetyl-L-lysyl-[protein] + NAD(+) + H2O = 2''-O-acetyl-ADP-D-ribose + nicotinamide + L-lysyl-[protein]. NAD-dependent protein deacetylase which modulates the activities of several enzymes which are inactive in their acetylated form. This Clostridium tetani (strain Massachusetts / E88) protein is NAD-dependent protein deacetylase.